Here is a 306-residue protein sequence, read N- to C-terminus: Leucine-rich repeat-containing protein 75B (306 aa).

The disordered stretch occupies residues 1–22; that stretch reads MGARLGRRARADAPAAPSAGPA. Low complexity predominate over residues 12–22; it reads DAPAAPSAGPA. LRR repeat units follow at residues 173 to 186 and 198 to 211; these read LVVLDLSFTELSDE and LPRLTQLLLNGNRL.

This sequence belongs to the LRRC75 family.

Its function is as follows. May suppress myogenic differentiation by modulating MYOG expression and Erk1/2 signaling. The polypeptide is Leucine-rich repeat-containing protein 75B (Mus musculus (Mouse)).